A 360-amino-acid chain; its full sequence is Peptide chain release factor 1 (360 aa).

N5-methylglutamine is present on Gln235. A compositionally biased stretch (basic and acidic residues) spans 291 to 308 (ASERRNLLGTGDRSDRNR). Positions 291 to 312 (ASERRNLLGTGDRSDRNRTYNF) are disordered.

Belongs to the prokaryotic/mitochondrial release factor family. Post-translationally, methylated by PrmC. Methylation increases the termination efficiency of RF1.

It is found in the cytoplasm. Peptide chain release factor 1 directs the termination of translation in response to the peptide chain termination codons UAG and UAA. In Yersinia pseudotuberculosis serotype I (strain IP32953), this protein is Peptide chain release factor 1.